A 398-amino-acid chain; its full sequence is Elongation factor Tu (398 aa).

The tr-type G domain occupies 10 to 208 (KPHVNVGTIG…ALDDYIPEPE (199 aa)). The tract at residues 19 to 26 (GHVDHGKT) is G1. A GTP-binding site is contributed by 19-26 (GHVDHGKT). Thr26 serves as a coordination point for Mg(2+). The segment at 61–65 (GITIA) is G2. The interval 82-85 (DCPG) is G3. Residues 82 to 86 (DCPGH) and 137 to 140 (NKAD) each bind GTP. A G4 region spans residues 137–140 (NKAD). Residues 175–177 (SAL) are G5.

Belongs to the TRAFAC class translation factor GTPase superfamily. Classic translation factor GTPase family. EF-Tu/EF-1A subfamily. As to quaternary structure, monomer.

The protein localises to the cytoplasm. The enzyme catalyses GTP + H2O = GDP + phosphate + H(+). In terms of biological role, GTP hydrolase that promotes the GTP-dependent binding of aminoacyl-tRNA to the A-site of ribosomes during protein biosynthesis. This chain is Elongation factor Tu, found in Marinobacter nauticus (strain ATCC 700491 / DSM 11845 / VT8) (Marinobacter aquaeolei).